Consider the following 486-residue polypeptide: Scarecrow-like protein 15 (486 aa).

The disordered stretch occupies residues 1 to 28 (MKIPASSPQDTTNNNNNTNSTDSNHLSM). Over residues 10–24 (DTTNNNNNTNSTDSN) the composition is skewed to low complexity. Residues 113 to 485 (DSVDNGGFDF…RALVATSAWR (373 aa)) enclose the GRAS domain. The interval 120–179 (FDFIEDLIRVVDCVESDELQLAQVVLSRLNQRLRSPAGRPLQRAAFYFKEALGSFLTGSN) is leucine repeat I (LRI). Residues 198–266 (IKEYSGISPI…VSGGFLRVTA (69 aa)) form a VHIID region. A VHIID motif is present at residues 232–236 (VHVVD). Residues 278–310 (LVKENLTQFAAEMKIRFQIEFVLMKTFEMLSFK) form a leucine repeat II (LRII) region. The interval 320 to 410 (TVVLISPAIF…AFVLRPKISA (91 aa)) is PFYRE. An SAW region spans residues 413–485 (ETAADRRHTG…RALVATSAWR (73 aa)).

It belongs to the GRAS family. In terms of tissue distribution, expressed in seedlings, roots, leaves and flowers.

The protein resides in the nucleus. In terms of biological role, probable transcription factor involved in plant development. This Arabidopsis thaliana (Mouse-ear cress) protein is Scarecrow-like protein 15 (SCL15).